Reading from the N-terminus, the 642-residue chain is Assimilatory sulfite reductase (ferredoxin), chloroplastic (642 aa).

A chloroplast-targeting transit peptide spans 1 to 61 (MSSTFRAPAG…SSSSSSPIQA (61 aa)). The interval 46–74 (PVPPSASSSSSSPIQAVSTPAKPETATKR) is disordered. [4Fe-4S] cluster-binding residues include Cys-503, Cys-509, Cys-549, and Cys-553. Position 553 (Cys-553) interacts with siroheme.

Belongs to the nitrite and sulfite reductase 4Fe-4S domain family. As to quaternary structure, monomer. Interacts with ferredoxin. The cofactor is siroheme. [4Fe-4S] cluster serves as cofactor. Post-translationally, phosphorylated; this phosphorylation reduces DNA-binding. Present in leaves and roots.

It is found in the plastid. The protein resides in the chloroplast stroma. The protein localises to the chloroplast nucleoid. It localises to the plastid stroma. The catalysed reaction is hydrogen sulfide + 6 oxidized [2Fe-2S]-[ferredoxin] + 3 H2O = sulfite + 6 reduced [2Fe-2S]-[ferredoxin] + 7 H(+). Functionally, essential protein with sulfite reductase activity required in assimilatory sulfate reduction pathway during both primary and secondary metabolism and thus involved in development and growth. DNA-binding protein that binds to both double-stranded and single-stranded DNA without significant sequence specificity to reversibly repress the transcriptional activity of chloroplast nucleoids by promoting DNA compaction and possibly regulate DNA replication. The protein is Assimilatory sulfite reductase (ferredoxin), chloroplastic (SIR) of Arabidopsis thaliana (Mouse-ear cress).